The following is a 264-amino-acid chain: Carbohydrate deacetylase (264 aa).

The Proton acceptor role is filled by D20. 3 residues coordinate Mg(2+): D21, H60, and H127. Residue H215 is the Proton donor of the active site.

The protein belongs to the YdjC deacetylase family. In terms of assembly, homodimer. It depends on Mg(2+) as a cofactor.

Probably catalyzes the deacetylation of acetylated carbohydrates an important step in the degradation of oligosaccharides. The sequence is that of Carbohydrate deacetylase from Thermus thermophilus (strain ATCC 27634 / DSM 579 / HB8).